A 278-amino-acid chain; its full sequence is Ribosomal RNA small subunit methyltransferase J (278 aa).

S-adenosyl-L-methionine-binding positions include 143-144 and Asp-197; that span reads ER.

It belongs to the methyltransferase superfamily. RsmJ family.

It is found in the cytoplasm. The enzyme catalyses guanosine(1516) in 16S rRNA + S-adenosyl-L-methionine = N(2)-methylguanosine(1516) in 16S rRNA + S-adenosyl-L-homocysteine + H(+). In terms of biological role, specifically methylates the guanosine in position 1516 of 16S rRNA. This Marinobacter nauticus (strain ATCC 700491 / DSM 11845 / VT8) (Marinobacter aquaeolei) protein is Ribosomal RNA small subunit methyltransferase J.